Reading from the N-terminus, the 423-residue chain is Glutamate-1-semialdehyde 2,1-aminomutase (423 aa).

K263 carries the post-translational modification N6-(pyridoxal phosphate)lysine.

It belongs to the class-III pyridoxal-phosphate-dependent aminotransferase family. HemL subfamily. It depends on pyridoxal 5'-phosphate as a cofactor.

Its subcellular location is the cytoplasm. The enzyme catalyses (S)-4-amino-5-oxopentanoate = 5-aminolevulinate. It functions in the pathway porphyrin-containing compound metabolism; protoporphyrin-IX biosynthesis; 5-aminolevulinate from L-glutamyl-tRNA(Glu): step 2/2. This Ignicoccus hospitalis (strain KIN4/I / DSM 18386 / JCM 14125) protein is Glutamate-1-semialdehyde 2,1-aminomutase.